The primary structure comprises 546 residues: Chaperonin GroEL (546 aa).

ATP is bound by residues 30–33 (TLGP), K51, 87–91 (DGTTT), G415, 479–481 (NAA), and D495.

It belongs to the chaperonin (HSP60) family. In terms of assembly, forms a cylinder of 14 subunits composed of two heptameric rings stacked back-to-back. Interacts with the co-chaperonin GroES.

Its subcellular location is the cytoplasm. It catalyses the reaction ATP + H2O + a folded polypeptide = ADP + phosphate + an unfolded polypeptide.. Its function is as follows. Together with its co-chaperonin GroES, plays an essential role in assisting protein folding. The GroEL-GroES system forms a nano-cage that allows encapsulation of the non-native substrate proteins and provides a physical environment optimized to promote and accelerate protein folding. This is Chaperonin GroEL from Xanthomonas campestris pv. phaseoli.